Consider the following 2879-residue polypeptide: Peramine synthetase ppzA (2879 aa).

Basic and acidic residues predominate over residues 1–12 (MTYDEGGHRNNE). A disordered region spans residues 1 to 52 (MTYDEGGHRNNEETPQDVNMSSNNEGMSTSSPTGSYGEIIGQATVSVPQEDQ). Positions 16 to 34 (QDVNMSSNNEGMSTSSPTG) are enriched in polar residues. Residues 351-747 (QEQCRLQPNT…VGRKDTQVKI (397 aa)) are adenylation 1. The Carrier 1 domain maps to 882 to 958 (QPLSDMERLL…DLSRQSKYIE (77 aa)). The residue at position 919 (S919) is an O-(pantetheine 4'-phosphoryl)serine. Residues 997–1410 (DAYPCTPLQE…ITILTTEDLE (414 aa)) are condensation. The segment at 1433–1827 (DKVQHRPNAP…LSFVRRKDTT (395 aa)) is adenylation 2. Positions 1958 to 2050 (LEIGCGSGMM…KYLVKLIQDI (93 aa)) are methylation (Met) domain. Residues 2370 to 2448 (WPTTDTGKEL…RLLLDCCCDD (79 aa)) form the Carrier 2 domain. O-(pantetheine 4'-phosphoryl)serine is present on S2407. Positions 2500 to 2817 (TVLLTGANGF…LEDMLQDLDD (318 aa)) are thiesterase (TE) domain.

This sequence belongs to the NRP synthetase family. Pantetheine 4'-phosphate is required as a cofactor.

It carries out the reaction (S)-1-pyrroline-5-carboxylate + L-arginine + S-adenosyl-L-methionine + 2 ATP = peramine + 2 AMP + S-adenosyl-L-homocysteine + 2 diphosphate + H2O + 2 H(+). Its pathway is secondary metabolite biosynthesis. Functionally, nonribosomal peptide synthetase; part of the gene cluster that mediates the biosynthesis of pyrrolopyrazines, secondary metabolites showing insecticidal activity. The single multifunctional NRPS ppzA is responsible for the biosynthesis of peramine. The condensation domain of ppzA is proposed to catalyze formation of a peptide bond between 1-pyrroline-5-carboxylate and arginine. The methylation domain of ppzA would catalyze the N-methylation of the alpha-amino group of arginine. The reductase domain is proposed to be responsible for reduction of the thioester and the cyclization to form an iminium ion resulting in release from the peptide synthetase. Deprotonation of this intermediate and oxidation of the pyrroline ring would give rise to peramine. This final oxidation to give the pyrrole functionality may be spontaneous. In Epichloe species that produce only peramine, the peramine synthetase gene is not localized in a gene cluster, in contrast to Metarhizium species that contain additional pyrrolopyrazine biosynthesis genes. The 2-oxoglutarate-Fe(II) type oxidoreductase ppzC hydroxylates peramine to yield the newly identified compound 8-hydroxyperamine whereas ppzD converts L-proline into trans-4-hydroxy-L-proline, a precursor of peramine biosynthesis. This chain is Peramine synthetase ppzA, found in Metarhizium rileyi (strain RCEF 4871) (Nomuraea rileyi).